Reading from the N-terminus, the 408-residue chain is Peptidase T (408 aa).

Position 78 (His78) interacts with Zn(2+). Residue Asp80 is part of the active site. Asp140 is a binding site for Zn(2+). Glu173 acts as the Proton acceptor in catalysis. Residues Glu174, Asp196, and His379 each contribute to the Zn(2+) site.

It belongs to the peptidase M20B family. Requires Zn(2+) as cofactor.

It localises to the cytoplasm. The catalysed reaction is Release of the N-terminal residue from a tripeptide.. Functionally, cleaves the N-terminal amino acid of tripeptides. The protein is Peptidase T of Escherichia coli (strain K12 / MC4100 / BW2952).